A 153-amino-acid chain; its full sequence is Ribosome maturation factor RimP (153 aa).

It belongs to the RimP family.

It localises to the cytoplasm. In terms of biological role, required for maturation of 30S ribosomal subunits. This Clostridium botulinum (strain Alaska E43 / Type E3) protein is Ribosome maturation factor RimP.